Here is an 860-residue protein sequence, read N- to C-terminus: DNA mismatch repair protein MutS (860 aa).

An ATP-binding site is contributed by G607–S614.

This sequence belongs to the DNA mismatch repair MutS family.

Functionally, this protein is involved in the repair of mismatches in DNA. It is possible that it carries out the mismatch recognition step. This protein has a weak ATPase activity. The polypeptide is DNA mismatch repair protein MutS (Listeria monocytogenes serotype 4a (strain HCC23)).